Reading from the N-terminus, the 230-residue chain is MKYNSVIRKAIFLRRPNRFQAYVVLDDEELLVHVPNTGRCREILKEGCTVLLRKGTTPNRKTPYDLIAAYKGEVLINIDSQIPNKVVEEALRNKKIEKLVNFNNISREKTFGNSRFDFKLQDDNENTYFLEVKGVTLEENGETRFPDAPTERGKKHILELIEIKKLGMGAGIIFLIQIDNVNKFSPNDETDPKFGEALRLAKKEGVDIFAYNCKVTEEEIELLNSVEIVL.

Belongs to the SfsA family.

The protein is Sugar fermentation stimulation protein homolog of Clostridium perfringens (strain 13 / Type A).